The following is a 338-amino-acid chain: Malate dehydrogenase, mitochondrial (338 aa).

Residues 1-24 (MLSALARPAGAALRRSFSTSXQNN) constitute a mitochondrion transit peptide. NAD(+)-binding positions include 31–37 (GASGGIG) and D57. S33 is a glycosylation site (O-linked (GlcNAc) serine). 2 positions are modified to N6-acetyllysine; alternate: K78 and K91. An N6-succinyllysine; alternate mark is found at K78 and K91. The substrate site is built by R104 and R110. Residues N117 and 140 to 142 (ISN) contribute to the NAD(+) site. N142 is a binding site for substrate. K165 carries the post-translational modification N6-acetyllysine. R176 serves as a coordination point for substrate. K185 carries the N6-acetyllysine; alternate modification. K185 is subject to N6-succinyllysine; alternate. The Proton acceptor role is filled by H200. At K203 the chain carries N6-succinyllysine. K215 and K239 each carry N6-acetyllysine; alternate. Residues K215 and K239 each carry the N6-succinyllysine; alternate modification. N6-malonyllysine; alternate is present on K239. Residue S246 is modified to Phosphoserine. An NAD(+)-binding site is contributed by M251. K269 bears the N6-succinyllysine mark. N6-acetyllysine; alternate occurs at positions 296, 301, 307, 314, and 324. N6-succinyllysine; alternate is present on residues K296, K301, K307, K314, and K324. N6-malonyllysine; alternate is present on K307. A Phosphoserine modification is found at S326. K328, K329, and K335 each carry N6-acetyllysine; alternate. Residue K328 is modified to N6-succinyllysine; alternate. K329 bears the N6-malonyllysine; alternate mark. Position 335 is an N6-succinyllysine; alternate (K335).

This sequence belongs to the LDH/MDH superfamily. MDH type 1 family. Homodimer. Acetylation is enhanced after treatment either with trichostin A (TCA) or with nicotinamide (NAM) with the appearance of tri- and tetraacetylations. Glucose also increases acetylation.

Its subcellular location is the mitochondrion matrix. It carries out the reaction (S)-malate + NAD(+) = oxaloacetate + NADH + H(+). Enzyme activity is enhanced by acetylation. The protein is Malate dehydrogenase, mitochondrial (MDH2) of Sus scrofa (Pig).